Reading from the N-terminus, the 247-residue chain is Adenosylcobinamide-GDP ribazoletransferase (247 aa).

Transmembrane regions (helical) follow at residues 34–54 (IVTF…VFVA), 59–79 (CGIP…TGGF), 113–133 (GGLA…ELAL), 138–158 (MLAA…LLMY), 171–193 (VFIG…ILAA), and 194–214 (ILMP…AIFI).

This sequence belongs to the CobS family. Requires Mg(2+) as cofactor.

The protein localises to the cell inner membrane. It carries out the reaction alpha-ribazole + adenosylcob(III)inamide-GDP = adenosylcob(III)alamin + GMP + H(+). The catalysed reaction is alpha-ribazole 5'-phosphate + adenosylcob(III)inamide-GDP = adenosylcob(III)alamin 5'-phosphate + GMP + H(+). The protein operates within cofactor biosynthesis; adenosylcobalamin biosynthesis; adenosylcobalamin from cob(II)yrinate a,c-diamide: step 7/7. Its function is as follows. Joins adenosylcobinamide-GDP and alpha-ribazole to generate adenosylcobalamin (Ado-cobalamin). Also synthesizes adenosylcobalamin 5'-phosphate from adenosylcobinamide-GDP and alpha-ribazole 5'-phosphate. The sequence is that of Adenosylcobinamide-GDP ribazoletransferase from Citrobacter koseri (strain ATCC BAA-895 / CDC 4225-83 / SGSC4696).